The primary structure comprises 324 residues: DGAT1/2-independent enzyme synthesizing storage lipids (324 aa).

Residues 1–50 (MIDKNQTCGVGQDSVPYMICLIHILEEWFGVEQLEDYLNFANYLLWVFTP) lie on the Lumenal side of the membrane. A glycan (N-linked (GlcNAc...) asparagine) is linked at N5. Residues 51 to 71 (LILLILPYFTIFLLYLTIIFL) traverse the membrane as a helical segment. At 72-125 (HIYKRKNVLKEAYSHNLWDGARKTVATLWDGHAAVWHGYEVHGMEKIPEDGPAL) the chain is on the cytoplasmic side. Residues 126–146 (IIFYHGAIPIDFYYFMAKIFI) form a helical membrane-spanning segment. H130 is a catalytic residue. At 147–324 (HKGRTCRVVA…IMSALLERFH (178 aa)) the chain is on the lumenal side.

This sequence belongs to the diacylglycerol acyltransferase family. Highly divergent.

Its subcellular location is the endoplasmic reticulum membrane. The catalysed reaction is a 1,2-diacylglycerol + a 1,2-diacyl-sn-glycero-3-phosphocholine = a triacylglycerol + a 1-acyl-sn-glycero-3-phosphocholine. It carries out the reaction a 1-O-alkyl-2-acyl-sn-glycero-3-phosphocholine + a 1,2-diacylglycerol = a 1-O-alkyl-sn-glycero-3-phosphocholine + a triacylglycerol. The enzyme catalyses a 2-acylglycerol + an acyl-CoA = a 1,2-diacylglycerol + CoA. It catalyses the reaction an acyl-CoA + a 1,2-diacyl-sn-glycerol = a triacyl-sn-glycerol + CoA. The catalysed reaction is 2-(9Z-octadecenoyl)-glycerol + (9Z)-octadecenoyl-CoA = 1,2-di-(9Z-octadecenoyl)-glycerol + CoA. It carries out the reaction 1,2-di-(9Z-octadecenoyl)-sn-glycerol + (9Z)-octadecenoyl-CoA = 1,2,3-tri-(9Z-octadecenoyl)-glycerol + CoA. Its activity is regulated as follows. Acyltransferase activity is specifically inhibited by TMX1 at the endoplasmic reticulum, restricting accumulation of triacylglycerol. Catalytic subunit of the alternative triglyceride biosynthesis pathway, which mediates formation of triacylglycerol from diacylglycerol and membrane phospholipids. Synthesizes triacylglycerol at the expense of membrane phospholipids, such as phosphatidylcholine (PC) and its ether-linked form (ePC), thereby altering the composition of membranes. The alternative triglyceride biosynthesis pathway is probably required to provide the energy required for rapid growth when fuel sources are limiting. It maintains mitochondrial function during periods of extracellular lipid starvation. Can also use acyl-CoA as donor: acts as a acyl-CoA:monoacylglycerol acyltransferase (MGAT), but also shows acyl-CoA:diacylglycerol acyltransferase (DGAT) activity. In Homo sapiens (Human), this protein is DGAT1/2-independent enzyme synthesizing storage lipids.